Consider the following 74-residue polypeptide: Large ribosomal subunit protein bL28 (74 aa).

It belongs to the bacterial ribosomal protein bL28 family.

This chain is Large ribosomal subunit protein bL28, found in Buchnera aphidicola subsp. Baizongia pistaciae (strain Bp).